We begin with the raw amino-acid sequence, 331 residues long: Glutaminase (331 aa).

Substrate-binding residues include Ser77, Asn129, Glu173, Asn180, Tyr204, Tyr256, and Val274.

Belongs to the glutaminase family. As to quaternary structure, homotetramer.

The enzyme catalyses L-glutamine + H2O = L-glutamate + NH4(+). The polypeptide is Glutaminase (Oceanobacillus iheyensis (strain DSM 14371 / CIP 107618 / JCM 11309 / KCTC 3954 / HTE831)).